A 287-amino-acid chain; its full sequence is Thiazole synthase (287 aa).

The Schiff-base intermediate with DXP role is filled by Lys-111. Residues Gly-172, 203–204 (AG), and 225–226 (NT) each bind 1-deoxy-D-xylulose 5-phosphate. The disordered stretch occupies residues 268 to 287 (PQEGVISTRPYGSQADEIGS).

The protein belongs to the ThiG family. As to quaternary structure, homotetramer. Forms heterodimers with either ThiH or ThiS.

It is found in the cytoplasm. The catalysed reaction is [ThiS sulfur-carrier protein]-C-terminal-Gly-aminoethanethioate + 2-iminoacetate + 1-deoxy-D-xylulose 5-phosphate = [ThiS sulfur-carrier protein]-C-terminal Gly-Gly + 2-[(2R,5Z)-2-carboxy-4-methylthiazol-5(2H)-ylidene]ethyl phosphate + 2 H2O + H(+). It participates in cofactor biosynthesis; thiamine diphosphate biosynthesis. In terms of biological role, catalyzes the rearrangement of 1-deoxy-D-xylulose 5-phosphate (DXP) to produce the thiazole phosphate moiety of thiamine. Sulfur is provided by the thiocarboxylate moiety of the carrier protein ThiS. In vitro, sulfur can be provided by H(2)S. The sequence is that of Thiazole synthase from Rhodopirellula baltica (strain DSM 10527 / NCIMB 13988 / SH1).